Reading from the N-terminus, the 221-residue chain is Large ribosomal subunit protein uL3 (221 aa).

Belongs to the universal ribosomal protein uL3 family. As to quaternary structure, part of the 50S ribosomal subunit. Forms a cluster with proteins L14 and L19.

In terms of biological role, one of the primary rRNA binding proteins, it binds directly near the 3'-end of the 23S rRNA, where it nucleates assembly of the 50S subunit. This chain is Large ribosomal subunit protein uL3, found in Chlamydia trachomatis serovar L2 (strain ATCC VR-902B / DSM 19102 / 434/Bu).